A 473-amino-acid polypeptide reads, in one-letter code: 1-aminocyclopropane-1-carboxylate synthase (473 aa).

Substrate-binding positions include 84–85 (DY), Tyr145, and Asp151. At Lys273 the chain carries N6-(pyridoxal phosphate)lysine.

It belongs to the class-I pyridoxal-phosphate-dependent aminotransferase family. In terms of assembly, homodimer. Pyridoxal 5'-phosphate serves as cofactor.

The enzyme catalyses S-adenosyl-L-methionine = 1-aminocyclopropane-1-carboxylate + S-methyl-5'-thioadenosine + H(+). The catalysed reaction is (2S)-2-amino-3-butenoate + H2O = 2-oxobutanoate + NH4(+). The protein operates within alkene biosynthesis; ethylene biosynthesis via S-adenosyl-L-methionine; ethylene from S-adenosyl-L-methionine: step 1/2. With respect to regulation, inhibited by L-aminoethoxyvinylglycine (AVG). Inhibited by L-vinylglycine (L-VG). Inhibited by S-methylmethionine through a L-VG ketimine intermediate. Catalyzes the formation of 1-aminocyclopropane-1-carboxylate, a direct precursor of ethylene in higher plants. Also catalyzes the conversion of L-vinylglycine (L-VG) to alpha-ketobutyrate and ammonia. Can use S-methylmethionine as substrate. This chain is 1-aminocyclopropane-1-carboxylate synthase, found in Malus domestica (Apple).